A 286-amino-acid polypeptide reads, in one-letter code: MSDILNNLIHLLKLEKIDDLIFRGESQDLGFRQVFGGQVVAQALSAAMQVAPEDRILHSCHAYFLAPGDSQYPIIYDVETLREGRNFSALCVKAIQHKNTICHVTASFQVPEKGFEHQNTMPNVGAPEDFTDENVMLQKVAQTLPEPLNEKFAAERPFEVRTKYLNNPFNGTKLPAEQYSWFKTNGETPLDIKIQQCLLAYFSDFHCILTALHPHEKGFLQKGMKVATIDHSIWFHRPFDLNHWHLHAIESNNAFGGRGLAQGQIFSQDGQLIATTQQEGLIRFSE.

Active-site charge relay system residues include Asp204, Thr228, and Gln278.

This sequence belongs to the C/M/P thioester hydrolase family. In terms of assembly, homotetramer.

It carries out the reaction a fatty acyl-CoA + H2O = a fatty acid + CoA + H(+). In terms of biological role, thioesterase that has relatively broad substrate specificity, hydrolyzing primarily medium- and long-chain acyl-CoA substrates to free fatty acids and CoA. The sequence is that of Acyl-CoA thioesterase 2 (tesB) from Haemophilus influenzae (strain ATCC 51907 / DSM 11121 / KW20 / Rd).